The chain runs to 262 residues: Hydroxyethylthiazole kinase (262 aa).

Met-50 contacts substrate. 2 residues coordinate ATP: Arg-125 and Thr-171. Gly-198 contributes to the substrate binding site.

The protein belongs to the Thz kinase family. The cofactor is Mg(2+).

It catalyses the reaction 5-(2-hydroxyethyl)-4-methylthiazole + ATP = 4-methyl-5-(2-phosphooxyethyl)-thiazole + ADP + H(+). It participates in cofactor biosynthesis; thiamine diphosphate biosynthesis; 4-methyl-5-(2-phosphoethyl)-thiazole from 5-(2-hydroxyethyl)-4-methylthiazole: step 1/1. Catalyzes the phosphorylation of the hydroxyl group of 4-methyl-5-beta-hydroxyethylthiazole (THZ). This Escherichia coli O139:H28 (strain E24377A / ETEC) protein is Hydroxyethylthiazole kinase.